The chain runs to 125 residues: MLKEFKQFIARGNVIDLAVGVIIGAAFTAIVQSLVKNLINPLIGLFIGRIDLSNLTLKVGEANFRYGSFLNSIINFLIISFIVFLIVKAVNKFTKKEEEETPAAPTETDYLKEIRDLLKEKRSIK.

2 helical membrane-spanning segments follow: residues 14 to 34 (VIDLAVGVIIGAAFTAIVQSL) and 67 to 87 (GSFLNSIINFLIISFIVFLIV).

Belongs to the MscL family. In terms of assembly, homopentamer.

It is found in the cell membrane. Functionally, channel that opens in response to stretch forces in the membrane lipid bilayer. May participate in the regulation of osmotic pressure changes within the cell. The chain is Large-conductance mechanosensitive channel from Lactobacillus helveticus (strain DPC 4571).